Consider the following 286-residue polypeptide: CDP-diacylglycerol--serine O-phosphatidyltransferase (286 aa).

Helical transmembrane passes span 15 to 35 (ILPS…IKFA), 95 to 115 (MLSK…CVVL), 135 to 155 (EFFV…LLAL), 167 to 187 (VWFL…GIPM), and 207 to 227 (LAIC…VIII).

It belongs to the CDP-alcohol phosphatidyltransferase class-I family.

The protein resides in the cell membrane. It catalyses the reaction a CDP-1,2-diacyl-sn-glycerol + L-serine = a 1,2-diacyl-sn-glycero-3-phospho-L-serine + CMP + H(+). This chain is CDP-diacylglycerol--serine O-phosphatidyltransferase (pssA), found in Mycobacterium bovis (strain ATCC BAA-935 / AF2122/97).